The following is an 864-amino-acid chain: Leucine--tRNA ligase (864 aa).

Positions 42-52 (PYPSGKLHMGH) match the 'HIGH' region motif. Residues 624 to 628 (KMSKS) carry the 'KMSKS' region motif. K627 lines the ATP pocket.

This sequence belongs to the class-I aminoacyl-tRNA synthetase family.

It is found in the cytoplasm. The enzyme catalyses tRNA(Leu) + L-leucine + ATP = L-leucyl-tRNA(Leu) + AMP + diphosphate. This Burkholderia pseudomallei (strain 668) protein is Leucine--tRNA ligase.